A 326-amino-acid polypeptide reads, in one-letter code: tRNA-modifying protein YgfZ (326 aa).

2 residues coordinate folate: Trp-27 and Trp-189.

It belongs to the tRNA-modifying YgfZ family.

It localises to the cytoplasm. Its function is as follows. Folate-binding protein involved in regulating the level of ATP-DnaA and in the modification of some tRNAs. It is probably a key factor in regulatory networks that act via tRNA modification, such as initiation of chromosomal replication. This chain is tRNA-modifying protein YgfZ, found in Shigella boydii serotype 4 (strain Sb227).